The primary structure comprises 380 residues: D-alanine--D-alanine ligase (380 aa).

The 207-residue stretch at 142 to 348 (KQVLTAHGIR…YADLIDRLIE (207 aa)) folds into the ATP-grasp domain. 172-227 (QSRLGDNVFIKPANQGSSVGIHKASNVQEYLDGVADAFRYDYKVLVEQTIDGPQEV) is a binding site for ATP. Residues Asp302, Glu315, and Asn317 each coordinate Mg(2+).

It belongs to the D-alanine--D-alanine ligase family. Mg(2+) serves as cofactor. Mn(2+) is required as a cofactor.

The protein resides in the cytoplasm. The catalysed reaction is 2 D-alanine + ATP = D-alanyl-D-alanine + ADP + phosphate + H(+). Its pathway is cell wall biogenesis; peptidoglycan biosynthesis. Its function is as follows. Cell wall formation. This is D-alanine--D-alanine ligase from Levilactobacillus brevis (strain ATCC 367 / BCRC 12310 / CIP 105137 / JCM 1170 / LMG 11437 / NCIMB 947 / NCTC 947) (Lactobacillus brevis).